Here is a 234-residue protein sequence, read N- to C-terminus: Probable transcriptional regulatory protein PSPTO_3162 (234 aa).

It belongs to the TACO1 family.

The protein resides in the cytoplasm. The protein is Probable transcriptional regulatory protein PSPTO_3162 of Pseudomonas syringae pv. tomato (strain ATCC BAA-871 / DC3000).